Here is a 93-residue protein sequence, read N- to C-terminus: Protein Tat (93 aa).

The interval methionine 1–asparagine 24 is interaction with human CREBBP. Positions methionine 1–glycine 48 are transactivation. Residues cysteine 22, cysteine 25, and cysteine 27 each coordinate Zn(2+). Positions cysteine 22 to cysteine 37 are cysteine-rich. Lysine 28 bears the N6-acetyllysine; by host PCAF mark. Residues cysteine 30, histidine 33, cysteine 34, and cysteine 37 each coordinate Zn(2+). Residues phenylalanine 38 to glycine 48 are core. The span at glycine 48–threonine 58 shows a compositional bias: basic residues. The tract at residues glycine 48–serine 93 is disordered. The short motif at arginine 49–arginine 57 is the Nuclear localization signal, RNA-binding (TAR), and protein transduction element. Residues arginine 49 to glutamate 86 form an interaction with the host capping enzyme RNGTT region. N6-acetyllysine; by host EP300 and GCN5L2 is present on residues lysine 50 and lysine 51. Arginine 52 bears the Asymmetric dimethylarginine; by host PRMT6 mark. Residue lysine 71 forms a Glycyl lysine isopeptide (Lys-Gly) (interchain with G-Cter in ubiquitin) linkage. Positions proline 73–threonine 82 are enriched in polar residues. Residues glycine 83 to serine 93 are compositionally biased toward basic and acidic residues.

Belongs to the lentiviruses Tat family. Interacts with host CCNT1. Associates with the P-TEFb complex composed at least of Tat, P-TEFb (CDK9 and CCNT1), TAR RNA, RNA Pol II. Recruits the HATs CREBBP, TAF1/TFIID, EP300, PCAF and GCN5L2. Interacts with host KAT5/Tip60; this interaction targets the latter to degradation. Interacts with the host deacetylase SIRT1. Interacts with host capping enzyme RNGTT; this interaction stimulates RNGTT. Binds to host KDR, and to the host integrins ITGAV/ITGB3 and ITGA5/ITGB1. Interacts with host KPNB1/importin beta-1 without previous binding to KPNA1/importin alpha-1. Interacts with EIF2AK2. Interacts with host nucleosome assembly protein NAP1L1; this interaction may be required for the transport of Tat within the nucleus, since the two proteins interact at the nuclear rim. Interacts with host C1QBP/SF2P32; this interaction involves lysine-acetylated Tat. Interacts with the host chemokine receptors CCR2, CCR3 and CXCR4. Interacts with host DPP4/CD26; this interaction may trigger an anti-proliferative effect. Interacts with host LDLR. Interacts with the host extracellular matrix metalloproteinase MMP1. Interacts with host PRMT6; this interaction mediates Tat's methylation. Interacts with, and is ubiquitinated by MDM2/Hdm2. Interacts with host PSMC3 and HTATIP2. Interacts with STAB1; this interaction may overcome SATB1-mediated repression of IL2 and IL2RA (interleukin) in T cells by binding to the same domain than HDAC1. Interacts (when acetylated) with human CDK13, thereby increasing HIV-1 mRNA splicing and promoting the production of the doubly spliced HIV-1 protein Nef. Interacts with host TBP; this interaction modulates the activity of transcriptional pre-initiation complex. Interacts with host RELA. Asymmetrical arginine methylation by host PRMT6 seems to diminish the transactivation capacity of Tat and affects the interaction with host CCNT1. Post-translationally, acetylation by EP300, CREBBP, GCN5L2/GCN5 and PCAF regulates the transactivation activity of Tat. EP300-mediated acetylation of Lys-50 promotes dissociation of Tat from the TAR RNA through the competitive binding to PCAF's bromodomain. In addition, the non-acetylated Tat's N-terminus can also interact with PCAF. PCAF-mediated acetylation of Lys-28 enhances Tat's binding to CCNT1. Lys-50 is deacetylated by SIRT1. In terms of processing, polyubiquitination by host MDM2 does not target Tat to degradation, but activates its transactivation function and fosters interaction with CCNT1 and TAR RNA. Phosphorylated by EIF2AK2 on serine and threonine residues adjacent to the basic region important for TAR RNA binding and function. Phosphorylation of Tat by EIF2AK2 is dependent on the prior activation of EIF2AK2 by dsRNA.

It localises to the host nucleus. It is found in the host nucleolus. The protein localises to the host cytoplasm. Its subcellular location is the secreted. Its function is as follows. Transcriptional activator that increases RNA Pol II processivity, thereby increasing the level of full-length viral transcripts. Recognizes a hairpin structure at the 5'-LTR of the nascent viral mRNAs referred to as the transactivation responsive RNA element (TAR) and recruits the cyclin T1-CDK9 complex (P-TEFb complex) that will in turn hyperphosphorylate the RNA polymerase II to allow efficient elongation. The CDK9 component of P-TEFb and other Tat-activated kinases hyperphosphorylate the C-terminus of RNA Pol II that becomes stabilized and much more processive. Other factors such as HTATSF1/Tat-SF1, SUPT5H/SPT5, and HTATIP2 are also important for Tat's function. Besides its effect on RNA Pol II processivity, Tat induces chromatin remodeling of proviral genes by recruiting the histone acetyltransferases (HATs) CREBBP, EP300 and PCAF to the chromatin. This also contributes to the increase in proviral transcription rate, especially when the provirus integrates in transcriptionally silent region of the host genome. To ensure maximal activation of the LTR, Tat mediates nuclear translocation of NF-kappa-B by interacting with host RELA. Through its interaction with host TBP, Tat may also modulate transcription initiation. Tat can reactivate a latently infected cell by penetrating in it and transactivating its LTR promoter. In the cytoplasm, Tat is thought to act as a translational activator of HIV-1 mRNAs. Extracellular circulating Tat can be endocytosed by surrounding uninfected cells via the binding to several surface receptors such as CD26, CXCR4, heparan sulfate proteoglycans (HSPG) or LDLR. Neurons are rarely infected, but they internalize Tat via their LDLR. Through its interaction with nuclear HATs, Tat is potentially able to control the acetylation-dependent cellular gene expression. Modulates the expression of many cellular genes involved in cell survival, proliferation or in coding for cytokines or cytokine receptors. Tat plays a role in T-cell and neurons apoptosis. Tat induced neurotoxicity and apoptosis probably contribute to neuroAIDS. Circulating Tat also acts as a chemokine-like and/or growth factor-like molecule that binds to specific receptors on the surface of the cells, affecting many cellular pathways. In the vascular system, Tat binds to ITGAV/ITGB3 and ITGA5/ITGB1 integrins dimers at the surface of endothelial cells and competes with bFGF for heparin-binding sites, leading to an excess of soluble bFGF. This chain is Protein Tat, found in Pan troglodytes (Chimpanzee).